Reading from the N-terminus, the 169-residue chain is 2-C-methyl-D-erythritol 2,4-cyclodiphosphate synthase (169 aa).

Residues D13 and H15 each coordinate a divalent metal cation. Residues 13–15 (DVH) and 39–40 (HS) each bind 4-CDP-2-C-methyl-D-erythritol 2-phosphate. H47 provides a ligand contact to a divalent metal cation. Residues 61–63 (DIG), 66–70 (FPDTD), F144, and R147 contribute to the 4-CDP-2-C-methyl-D-erythritol 2-phosphate site.

Belongs to the IspF family. In terms of assembly, homotrimer. A divalent metal cation serves as cofactor.

The enzyme catalyses 4-CDP-2-C-methyl-D-erythritol 2-phosphate = 2-C-methyl-D-erythritol 2,4-cyclic diphosphate + CMP. It participates in isoprenoid biosynthesis; isopentenyl diphosphate biosynthesis via DXP pathway; isopentenyl diphosphate from 1-deoxy-D-xylulose 5-phosphate: step 4/6. In terms of biological role, involved in the biosynthesis of isopentenyl diphosphate (IPP) and dimethylallyl diphosphate (DMAPP), two major building blocks of isoprenoid compounds. Catalyzes the conversion of 4-diphosphocytidyl-2-C-methyl-D-erythritol 2-phosphate (CDP-ME2P) to 2-C-methyl-D-erythritol 2,4-cyclodiphosphate (ME-CPP) with a corresponding release of cytidine 5-monophosphate (CMP). The polypeptide is 2-C-methyl-D-erythritol 2,4-cyclodiphosphate synthase (Cupriavidus pinatubonensis (strain JMP 134 / LMG 1197) (Cupriavidus necator (strain JMP 134))).